Consider the following 962-residue polypeptide: Spliceosome associated factor 3, U4/U6 recycling protein (962 aa).

Over residues 1-21 the composition is skewed to low complexity; that stretch reads MATTAASSASEPEVEPQAGPE. Residues 1 to 92 are disordered; that stretch reads MATTAASSAS…EDEWEYDEEE (92 aa). Position 2 is an N-acetylalanine (alanine 2). The mediates interaction with PRPF3 stretch occupies residues 2–352; sequence ATTAASSASE…LVPDLWIRYS (351 aa). The residue at position 10 (serine 10) is a Phosphoserine. The segment covering 81–92 has biased composition (acidic residues); that stretch reads AGEDEWEYDEEE. HAT repeat units lie at residues 127-159, 165-196, 202-238, 243-276, 325-357, 360-392, 395-431, 441-474, and 488-521; these read GELS…DEIS, LDRE…YSVG, GGLE…FESA, ARLE…WSEE, GDPA…YLDR, KVKD…AMER, LDHQ…YLRR, KELE…PSCL, and NNMQ…LERA. Serine 216 is modified (phosphoserine). Residues 488–521 form a required for interaction with USP4 region; sequence NNMQKARELWDSIMTRGNAKYANMWLEYYNLERA. Residues 538 to 952 are necessary and sufficient for U6 snRNA binding; the sequence is CTSDYPEHVC…VATEAPKMSN (415 aa). A coiled-coil region spans residues 559-618; sequence TLEDWDLAIQKTETRLARVNEQRMKAAEKEAALVQQEEEKAEQRKKVRAEKKALKKKKKT. The span at 591 to 602 shows a compositional bias: basic and acidic residues; that stretch reads LVQQEEEKAEQR. Positions 591 to 696 are disordered; it reads LVQQEEEKAE…SLKRDMPKVA (106 aa). The interval 601 to 670 is required for nuclear localization; the sequence is QRKKVRAEKK…KEETELSGKC (70 aa). The Nuclear localization signal signature appears at 602–609; the sequence is RKKVRAEK. The segment covering 603-618 has biased composition (basic residues); the sequence is KKVRAEKKALKKKKKT. A compositionally biased stretch (acidic residues) spans 627–640; it reads DEDEENEWGEEEEE. A Phosphoserine modification is found at serine 651. Basic and acidic residues predominate over residues 680-696; it reads KQKEKAASLKRDMPKVA. Residues 704 to 782 form the RRM 1 domain; sequence VTVFVSNLPY…RPMFVSPCVD (79 aa). Phosphoserine occurs at positions 795 and 852. The RRM 2 domain occupies 801–878; sequence HKLFISGLPF…NVIKVAISNP (78 aa). The segment at 880 to 962 is disordered; it reads QRKVPEKPEV…ADFAKLLLRK (83 aa). An Omega-N-methylarginine modification is found at arginine 906.

As to quaternary structure, component of the 7SK snRNP complex at least composed of P-TEFb (composed of CDK9 and CCNT1/cyclin-T1), HEXIM1, HEXIM2, BCDIN3, SART3 proteins and 7SK and U6 snRNAs. Interacts with AGO1 and AGO2. Interacts with PRPF3 and USP4; the interaction with PRPF3 is direct and recruits USP4 to its substrate PRPF3. Interacts with USP15; the interaction is direct. Ubiquitously expressed, with low level of expression in liver, heart and skeletal. Also detected in hematopoietic cells (at protein level).

Its subcellular location is the nucleus. The protein resides in the nucleoplasm. It localises to the cajal body. The protein localises to the nucleus speckle. It is found in the cytoplasm. Its function is as follows. U6 snRNP-binding protein that functions as a recycling factor of the splicing machinery. Promotes the initial reassembly of U4 and U6 snRNPs following their ejection from the spliceosome during its maturation. Also binds U6atac snRNPs and may function as a recycling factor for U4atac/U6atac spliceosomal snRNP, an initial step in the assembly of U12-type spliceosomal complex. The U12-type spliceosomal complex plays a role in the splicing of introns with non-canonical splice sites. May also function as a substrate-targeting factor for deubiquitinases like USP4 and USP15. Recruits USP4 to ubiquitinated PRPF3 within the U4/U5/U6 tri-snRNP complex, promoting PRPF3 deubiquitination and thereby regulating the spliceosome U4/U5/U6 tri-snRNP spliceosomal complex disassembly. May also recruit the deubiquitinase USP15 to histone H2B and mediate histone deubiquitination, thereby regulating gene expression and/or DNA repair. May play a role in hematopoiesis probably through transcription regulation of specific genes including MYC. The protein is Spliceosome associated factor 3, U4/U6 recycling protein of Mus musculus (Mouse).